The sequence spans 303 residues: Bifunctional protein FolD (303 aa).

Residues 175-177 (GVS) and Ile-243 contribute to the NADP(+) site.

It belongs to the tetrahydrofolate dehydrogenase/cyclohydrolase family. As to quaternary structure, homodimer.

The enzyme catalyses (6R)-5,10-methylene-5,6,7,8-tetrahydrofolate + NADP(+) = (6R)-5,10-methenyltetrahydrofolate + NADPH. The catalysed reaction is (6R)-5,10-methenyltetrahydrofolate + H2O = (6R)-10-formyltetrahydrofolate + H(+). Its pathway is one-carbon metabolism; tetrahydrofolate interconversion. Functionally, catalyzes the oxidation of 5,10-methylenetetrahydrofolate to 5,10-methenyltetrahydrofolate and then the hydrolysis of 5,10-methenyltetrahydrofolate to 10-formyltetrahydrofolate. The polypeptide is Bifunctional protein FolD (Xanthomonas axonopodis pv. citri (strain 306)).